A 316-amino-acid polypeptide reads, in one-letter code: Olfactory receptor 5P79 (316 aa).

Topologically, residues 1–28 are extracellular; the sequence is MGILKDGNHTAVTEFILLGLTDDPVLKV. N-linked (GlcNAc...) asparagine glycosylation is present at Asn-8. The helical transmembrane segment at 29-49 threads the bilayer; sequence VLFTIILCIYLVTVSGNLSTI. Over 50–57 the chain is Cytoplasmic; the sequence is LLIRVSSQ. The chain crosses the membrane as a helical span at residues 58-78; the sequence is LHHPMYFFLSHLASVDIGISS. The Extracellular portion of the chain corresponds to 79 to 102; that stretch reads SVTPNMLVNFLLERSTISYLGCGI. Cys-100 and Cys-192 are joined by a disulfide. A helical membrane pass occupies residues 103 to 123; it reads QLGSGAFFGSTESFLLAAMAY. The Cytoplasmic portion of the chain corresponds to 124-136; that stretch reads DHFMAICNPLLYS. A helical membrane pass occupies residues 137-157; sequence TKMSTQVCIQLLVGSYIGGFL. The Extracellular segment spans residues 158 to 199; sequence NASSFILSFFSFLFCGPNKVNHFFCDFTPLVELSCSDNSVLL. The helical transmembrane segment at 200–220 threads the bilayer; that stretch reads ILDSFSAGSIIVITVLVIAIS. Residues 221–240 are Cytoplasmic-facing; sequence YTYILITILKMHSTEGRHKA. Residues 241–261 form a helical membrane-spanning segment; the sequence is FSTCTSHLTAVTVFYGTVTFI. Topologically, residues 262-274 are extracellular; it reads YVMPKSSYSTDQN. The chain crosses the membrane as a helical span at residues 275–297; it reads KVLSVFYMIAIAIPMLNPLIYSL. Residues 298–316 lie on the Cytoplasmic side of the membrane; it reads RNNEIKNALKRQLSKKTFS.

Belongs to the G-protein coupled receptor 1 family.

It localises to the cell membrane. Potential odorant receptor. The sequence is that of Olfactory receptor 5P79 from Mus musculus (Mouse).